A 196-amino-acid polypeptide reads, in one-letter code: Ribosome maturation factor RimM (196 aa).

Residues 118-196 (QGEYYWRDLI…EMTVDWDPDF (79 aa)) form the PRC barrel domain.

Belongs to the RimM family. Binds ribosomal protein uS19.

It is found in the cytoplasm. Its function is as follows. An accessory protein needed during the final step in the assembly of 30S ribosomal subunit, possibly for assembly of the head region. Essential for efficient processing of 16S rRNA. May be needed both before and after RbfA during the maturation of 16S rRNA. It has affinity for free ribosomal 30S subunits but not for 70S ribosomes. The polypeptide is Ribosome maturation factor RimM (Alcanivorax borkumensis (strain ATCC 700651 / DSM 11573 / NCIMB 13689 / SK2)).